We begin with the raw amino-acid sequence, 700 residues long: Elongation factor G (700 aa).

The region spanning 10 to 286 is the tr-type G domain; sequence TKVRNIGIMA…AVIDYLPNPL (277 aa). GTP-binding positions include 19 to 26, 83 to 87, and 137 to 140; these read AHIDAGKT, DTPGH, and NKMD.

This sequence belongs to the TRAFAC class translation factor GTPase superfamily. Classic translation factor GTPase family. EF-G/EF-2 subfamily.

Its subcellular location is the cytoplasm. Functionally, catalyzes the GTP-dependent ribosomal translocation step during translation elongation. During this step, the ribosome changes from the pre-translocational (PRE) to the post-translocational (POST) state as the newly formed A-site-bound peptidyl-tRNA and P-site-bound deacylated tRNA move to the P and E sites, respectively. Catalyzes the coordinated movement of the two tRNA molecules, the mRNA and conformational changes in the ribosome. This is Elongation factor G from Mycolicibacterium vanbaalenii (strain DSM 7251 / JCM 13017 / BCRC 16820 / KCTC 9966 / NRRL B-24157 / PYR-1) (Mycobacterium vanbaalenii).